The sequence spans 219 residues: Elongation factor Ts (219 aa).

The interval Thr82 to Val85 is involved in Mg(2+) ion dislocation from EF-Tu.

This sequence belongs to the EF-Ts family.

The protein localises to the cytoplasm. Its function is as follows. Associates with the EF-Tu.GDP complex and induces the exchange of GDP to GTP. It remains bound to the aminoacyl-tRNA.EF-Tu.GTP complex up to the GTP hydrolysis stage on the ribosome. The chain is Elongation factor Ts from Anaeromyxobacter sp. (strain Fw109-5).